Consider the following 330-residue polypeptide: Palmitoyltransferase SWF1 (330 aa).

Residues 1 to 21 traverse the membrane as a helical segment; it reads MLLFLVFILVVSQVVLLLLSP. Over 22–50 the chain is Cytoplasmic; sequence QFRDKFIFRWYYDEVYKPMILDNSRYRIK. A helical transmembrane segment spans residues 51–71; the sequence is FYVVPVFYLSVYSYMVYIFYS. The Lumenal segment spans residues 72 to 86; that stretch reads RTFAIISPMLTSIET. A helical membrane pass occupies residues 87-107; that stretch reads YVVIPLMLILPLFFGSMSMII. Residues 108–181 lie on the Cytoplasmic side of the membrane; the sequence is KPDSSNAHQI…GMGNYMYFYS (74 aa). The DHHC domain maps to 134-184; that stretch reads HECRTCKQVKPARSKHCTVCNSCIYLADHHCVWINNCVGMGNYMYFYSFLC. Residues 182–202 traverse the membrane as a helical segment; the sequence is FLCSNLLLLSYSFIRLIFIQF. The Lumenal segment spans residues 203–218; it reads NKSAYNTTPTGEKSLL. The chain crosses the membrane as a helical span at residues 219–239; that stretch reads ILSILCGSFTVILAVYCYFVF. Over 240 to 330 the chain is Cytoplasmic; it reads ELVNSGMTTN…FINNLREFIG (91 aa).

It belongs to the DHHC palmitoyltransferase family. SWF1 subfamily.

Its subcellular location is the endoplasmic reticulum membrane. The enzyme catalyses L-cysteinyl-[protein] + hexadecanoyl-CoA = S-hexadecanoyl-L-cysteinyl-[protein] + CoA. Palmitoyltransferase that targets several endosomal SNAREs. Palmitoylates the SNAREs at cysteine residues close to the cytoplasmic end of their transmembrane domain. May have a role in the cellular quality control of transmembrane domain-containing proteins. This Candida glabrata (strain ATCC 2001 / BCRC 20586 / JCM 3761 / NBRC 0622 / NRRL Y-65 / CBS 138) (Yeast) protein is Palmitoyltransferase SWF1 (SWF1).